We begin with the raw amino-acid sequence, 160 residues long: MIKISILCVGKLKEKYLAEGIKEYLKRLTPYAKVDISEVPDEPCPENAPMAIEEQVRQKEADKLAKKLRPGTFLVVLDLKGKMLSSEDMAGKIQDLALSGKSDLTFIIGGSIGLAPSLVERANLLLALSNLTFPHQLVRLLLMEQIYRWFKIIHNEPYHK.

S-adenosyl-L-methionine is bound by residues L77, G109, and 128-133 (LSNLTF).

The protein belongs to the RNA methyltransferase RlmH family. In terms of assembly, homodimer.

It is found in the cytoplasm. It carries out the reaction pseudouridine(1915) in 23S rRNA + S-adenosyl-L-methionine = N(3)-methylpseudouridine(1915) in 23S rRNA + S-adenosyl-L-homocysteine + H(+). Functionally, specifically methylates the pseudouridine at position 1915 (m3Psi1915) in 23S rRNA. The sequence is that of Ribosomal RNA large subunit methyltransferase H from Desulforamulus reducens (strain ATCC BAA-1160 / DSM 100696 / MI-1) (Desulfotomaculum reducens).